Reading from the N-terminus, the 1211-residue chain is DNA-directed RNA polymerase subunit beta' (1211 aa).

Zn(2+)-binding residues include C60, C62, C75, and C78. 3 residues coordinate Mg(2+): D449, D451, and D453. 4 residues coordinate Zn(2+): C818, C892, C899, and C902.

It belongs to the RNA polymerase beta' chain family. In terms of assembly, the RNAP catalytic core consists of 2 alpha, 1 beta, 1 beta' and 1 omega subunit. When a sigma factor is associated with the core the holoenzyme is formed, which can initiate transcription. Mg(2+) serves as cofactor. Requires Zn(2+) as cofactor.

The enzyme catalyses RNA(n) + a ribonucleoside 5'-triphosphate = RNA(n+1) + diphosphate. In terms of biological role, DNA-dependent RNA polymerase catalyzes the transcription of DNA into RNA using the four ribonucleoside triphosphates as substrates. The chain is DNA-directed RNA polymerase subunit beta' from Limosilactobacillus reuteri (strain DSM 20016) (Lactobacillus reuteri).